Consider the following 446-residue polypeptide: Movement protein TGB1 (446 aa).

A disordered region spans residues 40–60 (NKLDKRLQNTRKKNKNKEKTR). One can recognise a (+)RNA virus helicase ATP-binding domain in the interval 160-303 (KACCKKERNQ…WLHVPIVFSS (144 aa)). 193–200 (GVPGSGKS) serves as a coordination point for ATP. The (+)RNA virus helicase C-terminal domain maps to 304–444 (DSSHRFGPET…CYGEEHRPDE (141 aa)).

The protein belongs to the virgaviridae/benyvirus TGB1 movement protein family. In terms of assembly, homooligomer. Interacts with movement protein TGB3. TGB1-TGB3-TGB2 complex formation is enhanced by ATP hydrolysis. Interacts with the suppressor of RNA silencing (via N-terminus). Requires Mg(2+) as cofactor.

It is found in the host cell junction. The protein resides in the host plasmodesma. Its subcellular location is the host nucleus. It localises to the host cytoplasm. The protein localises to the host nucleolus. It is found in the host cytoskeleton. It catalyses the reaction ATP + H2O = ADP + phosphate + H(+). In terms of biological role, participates in the transport of viral genome to neighboring plant cells directly through plasmodesmata, without any budding. Multifunctional movement protein with RNA-binding, ATPase and helicase activities. Engages in homologous interactions leading to the formation of a ribonucleoprotein complex containing plus-sense viral RNAs (vRNPs). ATPase activity is probably required for vRNPs movement complex assembly. Intracellular delivery of TGBp1-containing vRNPs to plasmodesmata is facilitated by TGBp2 and TGBp3. This is Movement protein TGB1 from Arachis hypogaea (Peanut).